Reading from the N-terminus, the 220-residue chain is 5-hmdU DNA kinase 1 (220 aa).

It belongs to the thymidylate kinase family. 5-hmdU DNA kinase subfamily.

It catalyses the reaction 5-hydroxymethyl-dUMP in DNA + ATP = 5-phosphomethyl-dUMP in DNA + ADP + H(+). Functionally, phosphorylates 5-hydroxymethyluracil (5hmdU) into 5-phosphomethyl-2'-deoxyuridine (5- PmdU) on DNA as a step in the pathway leading to thymidine hypermodifications in the viral genome. The phosphate is added internally to the DNA polymer. As a final result of the pathway of hypermodification, 5-aminoethoxy-2'-deoxymethyluridine (5-NeOmdU) substitutes for about 40% of the thymidines in the viral DNA. These modifications probably prevent degradation of viral genome by the host restriction-modification antiviral defense system. This chain is 5-hmdU DNA kinase 1, found in Salmonella phage ViI.